We begin with the raw amino-acid sequence, 222 residues long: Beta-casein (222 aa).

Positions 1–15 (MKVLILACLVALALA) are cleaved as a signal peptide. Threonine 27 is modified (phosphothreonine). Phosphoserine occurs at positions 30, 32, 33, and 34.

It belongs to the beta-casein family. In terms of tissue distribution, mammary gland specific. Secreted in milk.

It is found in the secreted. Its function is as follows. Important role in determination of the surface properties of the casein micelles. This chain is Beta-casein (CSN2), found in Ovis aries (Sheep).